A 338-amino-acid chain; its full sequence is Protein FosB (338 aa).

Disordered stretches follow at residues 1 to 54 and 80 to 179; these read MFQA…PGSF and AQSQ…RREL. A compositionally biased stretch (polar residues) spans 13–31; it reads SRCSSSPSAESQYLSSVDS. At Ser-27 the chain carries Phosphoserine. A compositionally biased stretch (low complexity) spans 123–137; that stretch reads PSTSTSTSGPVSARP. The bZIP domain occupies 155–218; sequence EEKRRVRRER…ERLEFVLVAH (64 aa). Positions 157–182 are basic motif; sequence KRRVRRERNKLAAAKCRNRRRELTDR. Residues 183–211 are leucine-zipper; it reads LQAETDQLEEEKAELESEIAELQKEKERL. Disordered regions lie at residues 222-276 and 315-338; these read CKIP…PPNL and AGSQRTSGSEQPSDPLNSPSLLAL. Positions 256-265 are enriched in pro residues; it reads LPPPPPPPLP. A compositionally biased stretch (polar residues) spans 266–276; it reads FQSSRDAPPNL.

Belongs to the bZIP family. Fos subfamily. In terms of assembly, heterodimer; binds to DNA as heterodimer. Component of an AP-1 transcription factor complex; composed of FOS-JUN heterodimers. As part of the AP-1 transcription factor complex, forms heterodimers with JUN, JUNB or JUND, thereby binding to the AP-1 consensus sequence and stimulating transcription. Phosphorylated; phosphorylation is induced by chronic electroconvulsive seizure (ECS) treatment. Expressed in brain. Expressed in pyramidal cells in CA1 and CA3, in the dentate gyrus and the nucleus accumbens (at protein level).

The protein resides in the nucleus. Its function is as follows. Heterodimerizes with proteins of the JUN family to form an AP-1 transcription factor complex, thereby enhancing their DNA binding activity to an AP-1 consensus sequence 5'-TGA[GC]TCA-3' and enhancing their transcriptional activity. Exhibits transactivation activity in vitro. As part of the AP-1 complex, facilitates enhancer selection together with cell-type-specific transcription factors by collaboratively binding to nucleosomal enhancers and recruiting the SWI/SNF (BAF) chromatin remodeling complex to establish accessible chromatin. Together with JUN, plays a role in activation-induced cell death of T cells by binding to the AP-1 promoter site of FASLG/CD95L, and inducing its transcription in response to activation of the TCR/CD3 signaling pathway. Involved in the display of nurturing behavior towards newborns. May play a role in neurogenesis in the hippocampus and in learning and memory-related tasks by regulating the expression of various genes involved in neurogenesis, depression and epilepsy. Implicated in behavioral responses related to morphine reward and spatial memory. The polypeptide is Protein FosB (Rattus norvegicus (Rat)).